We begin with the raw amino-acid sequence, 201 residues long: Small ribosomal subunit protein uS4c (201 aa).

The interval 20–44 is disordered; that stretch reads GLTNKKPRAGSDLRNQSRSGKKSQY. Positions 89–150 constitute an S4 RNA-binding domain; the sequence is MRLDNILFRL…EQKSKALIQI (62 aa).

This sequence belongs to the universal ribosomal protein uS4 family. In terms of assembly, part of the 30S ribosomal subunit. Contacts protein S5. The interaction surface between S4 and S5 is involved in control of translational fidelity.

It localises to the plastid. Its subcellular location is the chloroplast. Its function is as follows. One of the primary rRNA binding proteins, it binds directly to 16S rRNA where it nucleates assembly of the body of the 30S subunit. With S5 and S12 plays an important role in translational accuracy. This chain is Small ribosomal subunit protein uS4c (rps4), found in Nicotiana tomentosiformis (Tobacco).